The primary structure comprises 819 residues: MEGAAGGEEKKNRMSSERRKEKSRDAARSRRSKESEVFYELAHQLPLPHNVSSHLDKASVMRLTISYLRVRKLLDAGDLDIEDDMKAQMNCFYLKALDGFVMVLTDDGDMIYISDNVNKYMGLTQFELTGHSVFDFTHPCDHEEMREMLTHRNGPIKKGKEQNTQRSFFLRMKCTLTSRGRTMNIKSATWKVLHCTGHIHVYDTNSNQPQCGYKKPPMTCLVLICEPIPHPSNIEIPLDSKTFLSRHSLDMKFSYCDERITELMGYEPEELLGRSIYEYYHALDSDHLTKTHHDMFTKGQVTTGQYRMLAKRGGYVWVETQATVIYNTKNSQPQCIVCVNYVVSGIIQHDLIFSLQQTECVLKPVESSDMKMTQLFTKVESEDTSCLFDKLKKEPDALTLLAPAAGDTIISLDFGSDDTETEDQQLEDVPLYNDVMFPSSDDKLTSINLAMSPLPASETPKPLRSNADPALNQEVALKLEPNAESLELSFTMPQIQDQPASPSDGSTRQSSPEPNSPSEYCFDVDSDMVNVFKLELVEKLFAEDTEAKNPFSTQDTDLDLEMLAPYIPMDDDFQLRSFDQLSPLESSSPNPPSVSTAFQQTQLQEPTITTTTTEELKTVTKDSTEDIKILITSPSSTHTPKETTTATTSSPYSGTQSRTASPNRAGQGVIEQTEKSHPRSPNVLSVTLSQRNTVPEEELNPKIIALQNAQRKRKMEHDGSLFQAAGIGTLLQQPDDRAPATSLSWKRVKGCKSSGQNGMEQKTIILIPSDLACRLLGQSMDGSGLPQLTSYDCEVNAPIQGSRNLLQGEELLRALDQVN.

The interval 1-31 (MEGAAGGEEKKNRMSSERRKEKSRDAARSRR) is disordered. The segment at 1–402 (MEGAAGGEEK…KEPDALTLLA (402 aa)) is interaction with TSGA10. Over residues 7–31 (GEEKKNRMSSERRKEKSRDAARSRR) the composition is skewed to basic and acidic residues. The bHLH domain maps to 18–71 (RRKEKSRDAARSRRSKESEVFYELAHQLPLPHNVSSHLDKASVMRLTISYLRVR). The segment at 22–31 (KSRDAARSRR) is DNA-binding. In terms of domain architecture, PAS 1 spans 86-159 (KAQMNCFYLK…THRNGPIKKG (74 aa)). A required for heterodimer formation with ARNT region spans residues 171–192 (RMKCTLTSRGRTMNIKSATWKV). The PAS 2 domain occupies 229-299 (PHPSNIEIPL…KTHHDMFTKG (71 aa)). Residue Ser-248 is modified to Phosphoserine; by CK1. Residues 303 to 346 (TGQYRMLAKRGGYVWVETQATVIYNTKNSQPQCIVCVNYVVSGI) form the PAC domain. Positions 402–599 (APAAGDTIIS…NPPSVSTAFQ (198 aa)) are ODD. At Pro-403 the chain carries 4-hydroxyproline. The span at 495 to 518 (IQDQPASPSDGSTRQSSPEPNSPS) shows a compositional bias: polar residues. Positions 495 to 521 (IQDQPASPSDGSTRQSSPEPNSPSEYC) are disordered. Residues 532–576 (FKLELVEKLFAEDTEAKNPFSTQDTDLDLEMLAPYIPMDDDFQLR) form an NTAD region. Lys-533 carries the post-translational modification N6-acetyllysine; alternate. A Glycyl lysine isopeptide (Lys-Gly) (interchain with G-Cter in ubiquitin); alternate cross-link involves residue Lys-533. Residues Lys-539 and Lys-548 each participate in a glycyl lysine isopeptide (Lys-Gly) (interchain with G-Cter in ubiquitin) cross-link. Ser-552 bears the Phosphoserine; by GSK3-beta mark. The residue at position 556 (Thr-556) is a Phosphothreonine; by GSK3-beta. Residue Pro-565 is modified to 4-hydroxyproline. Phosphoserine; by PLK3 is present on Ser-577. The tract at residues 577–778 (SFDQLSPLES…SDLACRLLGQ (202 aa)) is ID. The disordered stretch occupies residues 581–685 (LSPLESSSPN…SHPRSPNVLS (105 aa)). Residues 582-613 (SPLESSSPNPPSVSTAFQQTQLQEPTITTTTT) show a composition bias toward low complexity. Basic and acidic residues predominate over residues 614-628 (EELKTVTKDSTEDIK). Over residues 632–655 (TSPSSTHTPKETTTATTSSPYSGT) the composition is skewed to low complexity. A Phosphoserine; by PLK3 modification is found at Ser-650. Lys-702 carries the post-translational modification N6-acetyllysine. A Nuclear localization signal motif is present at residues 711 to 717 (RKRKMEH). Residues 779–819 (SMDGSGLPQLTSYDCEVNAPIQGSRNLLQGEELLRALDQVN) form a CTAD region. Position 793 is an S-nitrosocysteine (Cys-793). (3S)-3-hydroxyasparagine is present on Asn-796.

Interacts with the ARNT; forms a heterodimer that binds core DNA sequence 5'-TACGTG-3' within the hypoxia response element (HRE) of target gene promoters. Interacts with COPS5; the interaction increases the transcriptional activity of HIF1A through increased stability. Interacts with EP300 (via TAZ-type 1 domains); the interaction is stimulated in response to hypoxia and inhibited by CITED2. Interacts with CREBBP (via TAZ-type 1 domains). Interacts with NCOA1, NCOA2, APEX1 and HSP90. Interacts (hydroxylated within the ODD domain) with VHLL (via beta domain); the interaction, leads to polyubiquitination and subsequent HIF1A proteasomal degradation. During hypoxia, sumoylated HIF1A also binds VHL; the interaction promotes the ubiquitination of HIF1A. Interacts with SENP1; the interaction desumoylates HIF1A resulting in stabilization and activation of transcription. Interacts (via the ODD domain) with NAA10; the interaction appears not to acetylate HIF1A nor have any affect on protein stability, during hypoxia. Interacts with RWDD3; the interaction enhances HIF1A sumoylation. Interacts with TSGA10. Interacts with HIF3A. Interacts with RORA (via the DNA binding domain); the interaction enhances HIF1A transcription under hypoxia through increasing protein stability. Interaction with PSMA7 inhibits the transactivation activity of HIF1A under both normoxic and hypoxia-mimicking conditions. Interacts with USP20. Interacts with RACK1; promotes HIF1A ubiquitination and proteasome-mediated degradation. Interacts (via N-terminus) with USP19. Interacts with SIRT2. Interacts (deacetylated form) with EGLN1. Interacts with CBFA2T3. Interacts with HSP90AA1 and HSP90AB1. Interacts with DCUN1D1; this interaction increases the interaction between VHL and DCUN1D1. Interacts with HIF1AN. In terms of processing, S-nitrosylation of Cys-793 may be responsible for increased recruitment of p300 coactivator necessary for transcriptional activity of HIF-1 complex. Acetylation of Lys-533 by ARD1 increases interaction with VHL and stimulates subsequent proteasomal degradation. Deacetylation of Lys-702 by SIRT2 increases its interaction with and hydroxylation by EGLN1 thereby inactivating HIF1A activity by inducing its proteasomal degradation. Post-translationally, requires phosphorylation for DNA-binding. Phosphorylation at Ser-248 by CSNK1D/CK1 represses kinase activity and impairs ARNT binding. Phosphorylation by GSK3-beta and PLK3 promote degradation by the proteasome. In terms of processing, the iron and 2-oxoglutarate dependent 3-hydroxylation of asparagine is (S) stereospecific within HIF CTAD domains. Sumoylated; with SUMO1 under hypoxia. Sumoylation is enhanced through interaction with RWDD3. Both sumoylation and desumoylation seem to be involved in the regulation of its stability during hypoxia. Sumoylation can promote either its stabilization or its VHL-dependent degradation by promoting hydroxyproline-independent HIF1A-VHL complex binding, thus leading to HIF1A ubiquitination and proteasomal degradation. Desumoylation by SENP1 increases its stability amd transcriptional activity. There is a disaccord between various publications on the effect of sumoylation and desumoylation on its stability and transcriptional activity. Post-translationally, in normoxia, is hydroxylated on Pro-403 and Pro-565 in the oxygen-dependent degradation domain (ODD) by EGLN1/PHD2 and EGLN2/PHD1. EGLN3/PHD3 has also been shown to hydroxylate Pro-565. The hydroxylated prolines promote interaction with VHL, initiating rapid ubiquitination and subsequent proteasomal degradation. Deubiquitinated by USP20. Under hypoxia, proline hydroxylation is impaired and ubiquitination is attenuated, resulting in stabilization. In normoxia, is hydroxylated on Asn-796 by HIF1AN, thus abrogating interaction with CREBBP and EP300 and preventing transcriptional activation. Repressed by iron ion, via Fe(2+) prolyl hydroxylase (PHD) enzymes-mediated hydroxylation and subsequent proteasomal degradation.

The protein resides in the cytoplasm. Its subcellular location is the nucleus. The protein localises to the nucleus speckle. With respect to regulation, induced by reactive oxygen species (ROS). In terms of biological role, functions as a master transcriptional regulator of the adaptive response to hypoxia. Under hypoxic conditions, activates the transcription of over 40 genes, including erythropoietin, glucose transporters, glycolytic enzymes, vascular endothelial growth factor, HILPDA, and other genes whose protein products increase oxygen delivery or facilitate metabolic adaptation to hypoxia. Plays an essential role in embryonic vascularization, tumor angiogenesis and pathophysiology of ischemic disease. Heterodimerizes with ARNT; heterodimer binds to core DNA sequence 5'-TACGTG-3' within the hypoxia response element (HRE) of target gene promoters. Activation requires recruitment of transcriptional coactivators such as CREBBP and EP300. Activity is enhanced by interaction with NCOA1 and/or NCOA2. Interaction with redox regulatory protein APEX1 seems to activate CTAD and potentiates activation by NCOA1 and CREBBP. Involved in the axonal distribution and transport of mitochondria in neurons during hypoxia. In Eospalax fontanierii baileyi (Plateau zokor), this protein is Hypoxia-inducible factor 1-alpha (HIF1A).